A 490-amino-acid polypeptide reads, in one-letter code: Bifunctional protein HldE (490 aa).

Residues 1–330 are ribokinase; that stretch reads MERKEIESLF…AEIGHAHPDS (330 aa). 205–208 contacts ATP; the sequence is NRKE. Asp275 is an active-site residue. The segment at 356–490 is cytidylyltransferase; it reads FTNGCFDLLH…EKIRTGSIKE (135 aa).

In the N-terminal section; belongs to the carbohydrate kinase PfkB family. The protein in the C-terminal section; belongs to the cytidylyltransferase family. In terms of assembly, homodimer.

The enzyme catalyses D-glycero-beta-D-manno-heptose 7-phosphate + ATP = D-glycero-beta-D-manno-heptose 1,7-bisphosphate + ADP + H(+). The catalysed reaction is D-glycero-beta-D-manno-heptose 1-phosphate + ATP + H(+) = ADP-D-glycero-beta-D-manno-heptose + diphosphate. It participates in nucleotide-sugar biosynthesis; ADP-L-glycero-beta-D-manno-heptose biosynthesis; ADP-L-glycero-beta-D-manno-heptose from D-glycero-beta-D-manno-heptose 7-phosphate: step 1/4. It functions in the pathway nucleotide-sugar biosynthesis; ADP-L-glycero-beta-D-manno-heptose biosynthesis; ADP-L-glycero-beta-D-manno-heptose from D-glycero-beta-D-manno-heptose 7-phosphate: step 3/4. Functionally, catalyzes the phosphorylation of D-glycero-D-manno-heptose 7-phosphate at the C-1 position to selectively form D-glycero-beta-D-manno-heptose-1,7-bisphosphate. In terms of biological role, catalyzes the ADP transfer from ATP to D-glycero-beta-D-manno-heptose 1-phosphate, yielding ADP-D-glycero-beta-D-manno-heptose. The sequence is that of Bifunctional protein HldE from Geotalea uraniireducens (strain Rf4) (Geobacter uraniireducens).